A 388-amino-acid polypeptide reads, in one-letter code: Lipid-A-disaccharide synthase (388 aa).

Belongs to the LpxB family.

The enzyme catalyses a lipid X + a UDP-2-N,3-O-bis[(3R)-3-hydroxyacyl]-alpha-D-glucosamine = a lipid A disaccharide + UDP + H(+). It participates in bacterial outer membrane biogenesis; LPS lipid A biosynthesis. Condensation of UDP-2,3-diacylglucosamine and 2,3-diacylglucosamine-1-phosphate to form lipid A disaccharide, a precursor of lipid A, a phosphorylated glycolipid that anchors the lipopolysaccharide to the outer membrane of the cell. In Saccharophagus degradans (strain 2-40 / ATCC 43961 / DSM 17024), this protein is Lipid-A-disaccharide synthase.